A 51-amino-acid polypeptide reads, in one-letter code: Insulin (51 aa).

Intrachain disulfides connect cysteine 7–cysteine 37, cysteine 19–cysteine 50, and cysteine 36–cysteine 41.

Belongs to the insulin family. Heterodimer of a B chain and an A chain linked by two disulfide bonds.

The protein resides in the secreted. In terms of biological role, insulin decreases blood glucose concentration. It increases cell permeability to monosaccharides, amino acids and fatty acids. It accelerates glycolysis, the pentose phosphate cycle, and glycogen synthesis in liver. This chain is Insulin (INS), found in Meleagris gallopavo (Wild turkey).